A 54-amino-acid chain; its full sequence is Secreted virulence factor MC69 (54 aa).

Residues 1-16 (MKAAFVLALCASLASA) form the signal peptide. A disulfide bridge connects residues C36 and C46.

It belongs to the MC69 virulence factor family.

Its subcellular location is the secreted. In terms of biological role, secreted protein required for appressorial penetration of intact host epidermal cells and for pathogenicity. The chain is Secreted virulence factor MC69 from Pyricularia oryzae (strain 70-15 / ATCC MYA-4617 / FGSC 8958) (Rice blast fungus).